Consider the following 481-residue polypeptide: Cytochrome P450 monooxygenase dpfgJ (481 aa).

The helical transmembrane segment at leucine 23–tyrosine 43 threads the bilayer. An N-linked (GlcNAc...) asparagine glycan is attached at asparagine 338. Heme is bound at residue cysteine 427.

Belongs to the cytochrome P450 family. It depends on heme as a cofactor.

It is found in the membrane. The protein operates within secondary metabolite biosynthesis; terpenoid biosynthesis. Functionally, cytochrome P450 monooxygenase; part of the gene cluster that mediates the biosynthesis of diterpenoid pyrones. The first step of the pathway is the synthesis of the alpha-pyrone moiety by the polyketide synthase dpfgA via condensation of one acetyl-CoA starter unit with 3 malonyl-CoA units and 2 methylations. The alpha-pyrone is then combined with geranylgeranyl pyrophosphate (GGPP) formed by the GGPP synthase dpfgD through the action of the prenyltransferase dpfgC to yield a linear alpha-pyrone diterpenoid. Subsequent steps in the diterpenoid pyrone biosynthetic pathway involve the decalin core formation, which is initiated by the epoxidation of the C10-C11 olefin by the FAD-dependent oxidoreductase dpfgE, and is followed by a cyclization cascade catalyzed by the terpene cyclase dpfgB. The short chain dehydrogenase/reductase dpfgG then oxidizes the 8S hydroxy group to a ketone and the short chain dehydrogenase/reductase dpfgH reduces the ketone to the 8R hydroxy group to yield higginsianin B. Higginsianin B is further methylated by the methyltransferase dpfgI to produce the intermediate named FDDP B. The cytochrome P450 monooxygenase dfgpJ then catalyzes a three-step oxidation at C-27 to generate a carboxylic acid as well as C-26 hydroxylation. Finally, methyltransferase dpfgK methylates the carboxylic acid generated by dpfgJ, yielding the final diterpenoid pyrones from the pathway which were named FDDP D and FDDP E. The protein is Cytochrome P450 monooxygenase dpfgJ of Gibberella zeae (strain ATCC MYA-4620 / CBS 123657 / FGSC 9075 / NRRL 31084 / PH-1) (Wheat head blight fungus).